Consider the following 376-residue polypeptide: Glutamate 5-kinase (376 aa).

Residue Lys15 coordinates ATP. Substrate contacts are provided by Ser56, Asp143, and Asn155. An ATP-binding site is contributed by 175–176; sequence SD. Positions 281–358 constitute a PUA domain; the sequence is KGTLTIDAGA…PDVMMILGIT (78 aa).

The protein belongs to the glutamate 5-kinase family.

The protein resides in the cytoplasm. It catalyses the reaction L-glutamate + ATP = L-glutamyl 5-phosphate + ADP. It participates in amino-acid biosynthesis; L-proline biosynthesis; L-glutamate 5-semialdehyde from L-glutamate: step 1/2. Functionally, catalyzes the transfer of a phosphate group to glutamate to form L-glutamate 5-phosphate. This is Glutamate 5-kinase from Rhodopseudomonas palustris (strain TIE-1).